The chain runs to 151 residues: Small ribosomal subunit protein uS19 (151 aa).

The protein belongs to the universal ribosomal protein uS19 family.

The chain is Small ribosomal subunit protein uS19 (RPS15) from Picea mariana (Black spruce).